Consider the following 421-residue polypeptide: Histidine--tRNA ligase (421 aa).

It belongs to the class-II aminoacyl-tRNA synthetase family. As to quaternary structure, homodimer.

Its subcellular location is the cytoplasm. The catalysed reaction is tRNA(His) + L-histidine + ATP = L-histidyl-tRNA(His) + AMP + diphosphate + H(+). The chain is Histidine--tRNA ligase from Thermus thermophilus (strain ATCC BAA-163 / DSM 7039 / HB27).